Consider the following 309-residue polypeptide: tRNA dimethylallyltransferase (309 aa).

14-21 (GPTASGKS) contacts ATP. A substrate-binding site is contributed by 16–21 (TASGKS). The interval 39–42 (DSMQ) is interaction with substrate tRNA.

It belongs to the IPP transferase family. In terms of assembly, monomer. Requires Mg(2+) as cofactor.

The enzyme catalyses adenosine(37) in tRNA + dimethylallyl diphosphate = N(6)-dimethylallyladenosine(37) in tRNA + diphosphate. In terms of biological role, catalyzes the transfer of a dimethylallyl group onto the adenine at position 37 in tRNAs that read codons beginning with uridine, leading to the formation of N6-(dimethylallyl)adenosine (i(6)A). The protein is tRNA dimethylallyltransferase of Geobacter metallireducens (strain ATCC 53774 / DSM 7210 / GS-15).